The sequence spans 152 residues: Pleckstrin homology-like domain family A member 2 (152 aa).

2 positions are modified to phosphoserine: Ser3 and Ser42. In terms of domain architecture, PH spans 7 to 99 (VLREGELEKR…WNAAIALALI (93 aa)). A disordered region spans residues 112–152 (SRQERTAPAAPAEDAVAAAAAAPSEPSEPSRPSPQPKPRTP). A compositionally biased stretch (low complexity) spans 118-138 (APAAPAEDAVAAAAAAPSEPS). Pro residues predominate over residues 140 to 152 (PSRPSPQPKPRTP). A phosphoserine mark is found at Ser141 and Ser144. Thr151 carries the phosphothreonine modification.

Belongs to the PHLDA2 family. As to expression, expressed in placenta and adult prostate gland. In placenta, it is present in all cells of the villous cytotrophoblast. The protein is absent in cells from hydatidiform moles. Hydatidiform mole is a gestation characterized by abnormal development of both fetus and trophoblast. The majority of hydatidiform moles are associated with an excess of paternal to maternal genomes and are likely to result from the abnormal expression of imprinted genes (at protein level). Expressed at low levels in adult liver and lung, and fetal liver. Expressed in adult brain and neuroblastoma, medullablastoma and glioblastoma cell lines.

The protein resides in the cytoplasm. Its subcellular location is the membrane. In terms of biological role, plays a role in regulating placenta growth. May act via its PH domain that competes with other PH domain-containing proteins, thereby preventing their binding to membrane lipids. This Homo sapiens (Human) protein is Pleckstrin homology-like domain family A member 2 (PHLDA2).